The primary structure comprises 369 residues: Glycolate oxidase 5 (369 aa).

One can recognise an FMN hydroxy acid dehydrogenase domain in the interval Met1–Asp360. Tyr25 serves as a coordination point for glyoxylate. Residues Pro78–Ala80, Ser107, Gln128–Tyr130, and Thr156 contribute to the FMN site. Tyr130 contacts glyoxylate. Residue Arg165 coordinates glyoxylate. 2 residues coordinate FMN: Lys231 and Ser253. Residues His255 and Arg258 each contribute to the glyoxylate site. The active-site Proton acceptor is His255. FMN is bound by residues Asp286–Arg290 and Gly309–Arg310. Residues Ser367–Leu369 carry the Microbody targeting signal motif.

It belongs to the FMN-dependent alpha-hydroxy acid dehydrogenase family. In terms of assembly, homotetramer. FMN serves as cofactor.

The protein localises to the peroxisome. The catalysed reaction is glycolate + O2 = glyoxylate + H2O2. The protein operates within photosynthesis; photorespiration; glycine from 2-phosphoglycolate: step 2/3. In terms of biological role, catalyzes the oxidation of glycolate to glyoxylate, with a reduction of O2 to H2O2. Is a key enzyme in photorespiration in green plants. This Oryza sativa subsp. japonica (Rice) protein is Glycolate oxidase 5 (GLO5).